The sequence spans 239 residues: Fatty acid metabolism regulator protein (239 aa).

The HTH gntR-type domain maps to 6 to 74 (KGPASFAEKY…HGKPTRVNNF (69 aa)). A DNA-binding region (H-T-H motif) is located at residues 34 to 53 (ERELSELIGVTRTTLREVLQ).

As to quaternary structure, homodimer.

The protein resides in the cytoplasm. Its function is as follows. Multifunctional regulator of fatty acid metabolism. The protein is Fatty acid metabolism regulator protein of Shewanella pealeana (strain ATCC 700345 / ANG-SQ1).